Reading from the N-terminus, the 707-residue chain is Tubulin polyglutamylase ttll-11 (707 aa).

One can recognise a TTL domain in the interval 124–488 (RFTIDTSRAK…PLVRDTLLLV (365 aa)). Residues 279–282 (QEYV), lysine 293, and aspartate 295 each bind ATP. Residues 675–707 (RNRSGTNGRKQNFTDDNNNPNSFAHLPKINERL) are disordered. Residues 677–696 (RSGTNGRKQNFTDDNNNPNS) are compositionally biased toward polar residues.

This sequence belongs to the tubulin--tyrosine ligase family. Expressed in amphid sensory neurons. Weakly expressed in body wall muscles. Isoform a: Specifically expressed in ciliated sensory neurons in the head, including the IL1s, OLQ, head CEP, and amphid neurons. In the male tail, expressed in HOA, RnA, and phasmid neurons. Isoform b: Specifically expressed in male and hermaphrodite IL2 ciliated sensory neurons, and in male-specific CEM, HOB and RnB ciliated sensory neurons.

Its subcellular location is the cell projection. The protein localises to the axon. The protein resides in the perikaryon. It is found in the dendrite. It localises to the cilium. Its subcellular location is the extracellular vesicle. The catalysed reaction is L-glutamyl-[protein] + L-glutamate + ATP = gamma-L-glutamyl-L-glutamyl-[protein] + ADP + phosphate + H(+). Its function is as follows. Polyglutamylase which preferentially modifies tubulin. Involved in the side-chain initiation step of the polyglutamylation reaction. By controlling tubulin glutamylation, regulates ciliary specialization and motor-based transport. Promotes the formation of A and B tubule singlets by splaying microtubule doublets in cilia. Together with ttll-4 and 5, required for male mating. Specifically promotes tubulin glutamylation in a subset of ciliated neurons including amphid, phasmid, CEP and RnA neurons. Functionally, specifically promotes tubulin glutamylation in male ciliated CEM, HOB and RnB neurons that release bioactive extracellular vesicles. Regulates the localization of TRP channel pdk-2 in male CEM, HOB and RnB neurons. Regulates the environmental release of bioactive extracellular vesicles in cilia. This chain is Tubulin polyglutamylase ttll-11, found in Caenorhabditis elegans.